A 435-amino-acid chain; its full sequence is MKTTYVNATIVTMNEQNEVIENGYIIVENDQIIDVKSGEFANDFEVDEVIDMKGKWVLPGLVNTHTHVVMSLLRGIGDDMLLQPWLETRIWPLESQFTPELAVASTELGLLEMVKSGTTSFSDMFNPIGVDQDAIMETVSRSGMRAAVSRTLFSFGTKEDEKKAIEEAEKYVKRYYNESGMLTTMVAPHSPYTCSTELLEECARIAVENQTMVHIHLSETEREVRDIEAKYGKRPVEYAASCGLFKRPTVIAHGVVLNDNERAFLAEHDVRVAHNPNSNLKLGSGIANVKAMLEAGIKVGIATDSVASNNNLDMFEEMRIATLLQKGIHQDATALPVETALTLATKGAAEVIGMKQTGSLEIGKCADFITIDPSNKPHLQPADEVLSHLVYAASGKDISDVIINGKRVVWNGECKTLDEERIIFEASRYKRGLQR.

Residues histidine 65 and histidine 67 each contribute to the Zn(2+) site. Glutamate 94, arginine 150, and histidine 189 together coordinate substrate. Histidine 216 provides a ligand contact to Zn(2+). Residues glutamate 219 and aspartate 304 each contribute to the substrate site. Residue aspartate 304 participates in Zn(2+) binding.

It belongs to the metallo-dependent hydrolases superfamily. MTA/SAH deaminase family. Zn(2+) is required as a cofactor.

The catalysed reaction is S-adenosyl-L-homocysteine + H2O + H(+) = S-inosyl-L-homocysteine + NH4(+). It carries out the reaction S-methyl-5'-thioadenosine + H2O + H(+) = S-methyl-5'-thioinosine + NH4(+). Its function is as follows. Catalyzes the deamination of 5-methylthioadenosine and S-adenosyl-L-homocysteine into 5-methylthioinosine and S-inosyl-L-homocysteine, respectively. Is also able to deaminate adenosine. This is 5-methylthioadenosine/S-adenosylhomocysteine deaminase from Bacillus cereus (strain AH187).